The chain runs to 1441 residues: Lysophospholipase NTE1 (1441 aa).

Topologically, residues 1–22 are lumenal; it reads MWLTSYVLPRLKNILLLQFHIT. The chain crosses the membrane as a helical span at residues 23–43; that stretch reads LPLNYLVLLLLSTVIITYLFL. The Cytoplasmic segment spans residues 44–1441; it reads RTRILSNYSQ…ENMLQRRNSI (1398 aa). Disordered stretches follow at residues 154-173, 210-236, 376-445, and 551-585; these read SNPSGDAAANATAFEPPSND, THLNEGTHPSTTNNTPGPGSPNLTGEI, QDDT…NSSS, and NRTGGKMASHSKRLNGSSRSNSRTDRSESFDHFRN. Positions 376–388 are enriched in polar residues; it reads QDDTGSSASTIQK. Residues 572 to 585 are compositionally biased toward basic and acidic residues; sequence SRTDRSESFDHFRN. A nucleoside 3',5'-cyclic phosphate is bound by residues 592 to 718 and 707 to 836; these read NQFS…LTNS and IYLK…VAKK. Residues 1137 to 1301 enclose the PNPLA domain; that stretch reads LVLGGGGARG…VDNLPVTEMT (165 aa). A GXGXXG motif is present at residues 1141-1146; sequence GGGARG. The GXSXG signature appears at 1168–1172; it reads GTSIG. S1170 acts as the Nucleophile in catalysis. D1288 functions as the Proton acceptor in the catalytic mechanism. A DGA/G motif is present at residues 1288–1290; sequence DGG.

The protein belongs to the NTE family.

Its subcellular location is the endoplasmic reticulum membrane. The enzyme catalyses a 1-acyl-sn-glycero-3-phosphocholine + H2O = sn-glycerol 3-phosphocholine + a fatty acid + H(+). With respect to regulation, inhibited by organophosphorus esters. Intracellular phospholipase B that catalyzes the double deacylation of phosphatidylcholine (PC) to glycerophosphocholine (GroPCho). Plays an important role in membrane lipid homeostasis. Responsible for the rapid PC turnover in response to inositol, elevated temperatures, or when choline is present in the growth medium. This is Lysophospholipase NTE1 (NTE1) from Kluyveromyces lactis (strain ATCC 8585 / CBS 2359 / DSM 70799 / NBRC 1267 / NRRL Y-1140 / WM37) (Yeast).